A 500-amino-acid polypeptide reads, in one-letter code: NAD(P)H-quinone oxidoreductase chain 4, chloroplastic (500 aa).

The next 14 helical transmembrane spans lie at 4–24, 35–55, 87–107, 113–130, 134–154, 167–187, 207–227, 242–262, 272–292, 305–325, 330–350, 386–406, 416–436, and 462–482; these read FPWL…IFFL, YTIC…CYHF, IGPV…AWPV, LFHF…GSFS, LLLF…LLSM, FILY…GVGL, VALE…KLPI, HYST…YGLI, AHSI…IYAA, IAYS…SITD, GAIL…FLAG, LALP…GIIT, IVIT…LLSM, and LFVS…PDFV.

This sequence belongs to the complex I subunit 4 family.

It is found in the plastid. The protein resides in the chloroplast thylakoid membrane. It carries out the reaction a plastoquinone + NADH + (n+1) H(+)(in) = a plastoquinol + NAD(+) + n H(+)(out). It catalyses the reaction a plastoquinone + NADPH + (n+1) H(+)(in) = a plastoquinol + NADP(+) + n H(+)(out). The sequence is that of NAD(P)H-quinone oxidoreductase chain 4, chloroplastic from Guizotia abyssinica (Niger).